A 108-amino-acid chain; its full sequence is Protein SMALL AUXIN UP-REGULATED RNA 51 (108 aa).

Belongs to the ARG7 family. Expressed in organ primordia. Hardly observed in leaves.

Its subcellular location is the cell membrane. In terms of biological role, provide a mechanistic link between auxin and plasma membrane H(+)-ATPases (PM H(+)-ATPases, e.g. AHA1 and AHA2), and triggers PM H(+)-ATPases activity by promoting phosphorylation of their C-terminal autoinhibitory domain as a result of PP2C-D subfamily of type 2C phosphatases inhibition, thus leading to the acidification of the apoplast and the facilitation of solutes and water uptake to drive cell expansion. Triggers plant growth probably by promoting cell elongation. Regulates branch angles and bending. This chain is Protein SMALL AUXIN UP-REGULATED RNA 51, found in Arabidopsis thaliana (Mouse-ear cress).